The chain runs to 417 residues: Probable secreted aspartic protease ARB_07536 (417 aa).

Positions 1–20 (MRGILILVALGAATIPQASA) are cleaved as a signal peptide. In terms of domain architecture, Peptidase A1 spans 42–413 (NTDLVTIGTP…DFEKNRVGLA (372 aa)). Residues N74, N91, N100, N170, N276, and N314 are each glycosylated (N-linked (GlcNAc...) asparagine). An intrachain disulfide couples C333 to C373.

The protein belongs to the peptidase A1 family.

The protein localises to the secreted. Probable secreted aspartic protease that supplies the fungus with nutrient amino acids. May be able to degrade the selected host's proteins involved in the immune defense. The polypeptide is Probable secreted aspartic protease ARB_07536 (Arthroderma benhamiae (strain ATCC MYA-4681 / CBS 112371) (Trichophyton mentagrophytes)).